Here is a 353-residue protein sequence, read N- to C-terminus: Putative glycosyltransferase TagX (353 aa).

It belongs to the glycosyltransferase 2 family.

The sequence is that of Putative glycosyltransferase TagX (tagX) from Staphylococcus aureus (strain COL).